The following is a 724-amino-acid chain: Methionine--tRNA ligase (724 aa).

A 'HIGH' region motif is present at residues 12–22 (PYVNNIPHLGN). Zn(2+) contacts are provided by Cys-143, Cys-146, Cys-155, and Cys-158. The short motif at 330-334 (KFSKS) is the 'KMSKS' region element. Lys-333 lines the ATP pocket. The 106-residue stretch at 560-665 (FREKVLLKVV…KNPIPGERII (106 aa)) folds into the tRNA-binding domain.

It belongs to the class-I aminoacyl-tRNA synthetase family. MetG type 1 subfamily. In terms of assembly, homodimer. Requires Zn(2+) as cofactor.

The protein resides in the cytoplasm. It carries out the reaction tRNA(Met) + L-methionine + ATP = L-methionyl-tRNA(Met) + AMP + diphosphate. Is required not only for elongation of protein synthesis but also for the initiation of all mRNA translation through initiator tRNA(fMet) aminoacylation. The sequence is that of Methionine--tRNA ligase from Borrelia garinii subsp. bavariensis (strain ATCC BAA-2496 / DSM 23469 / PBi) (Borreliella bavariensis).